Consider the following 196-residue polypeptide: Imidazoleglycerol-phosphate dehydratase (196 aa).

The protein belongs to the imidazoleglycerol-phosphate dehydratase family.

Its subcellular location is the cytoplasm. The enzyme catalyses D-erythro-1-(imidazol-4-yl)glycerol 3-phosphate = 3-(imidazol-4-yl)-2-oxopropyl phosphate + H2O. It functions in the pathway amino-acid biosynthesis; L-histidine biosynthesis; L-histidine from 5-phospho-alpha-D-ribose 1-diphosphate: step 6/9. This is Imidazoleglycerol-phosphate dehydratase from Desulforamulus reducens (strain ATCC BAA-1160 / DSM 100696 / MI-1) (Desulfotomaculum reducens).